A 209-amino-acid chain; its full sequence is Guanylyl cyclase-activating protein 3 (209 aa).

G2 carries the N-myristoyl glycine lipid modification. Position 3 is a deamidated asparagine (N3). 4 consecutive EF-hand domains span residues 15–50 (PTQETHVWYRTFMMEYPSGLQTLHEFKTLLGLQGLN), 52–87 (KANKHIDQVYNTFDTNKDGFVDFLEFIAAVNLIMQE), 88–123 (KMEQKLKWYFKLYDADGNGSIDKNELLDMFMAVQAL), and 130–165 (SPEEFINLVFHKIDINNDGELTLEEFINGMAKDQDL). Residues D65, N67, D69, E76, D101, D103, N105, S107, E112, D143, N145, D147, E149, and E154 each contribute to the Ca(2+) site. The tract at residues 187-209 (QPDMETDSSKSPDKAGLGKVKMK) is disordered.

As to expression, retina.

Functionally, stimulates guanylyl cyclase 1 (GC1) and GC2 when free calcium ions concentration is low and inhibits guanylyl cyclases when free calcium ions concentration is elevated. This Ca(2+)-sensitive regulation of guanylyl cyclase (GC) is a key event in recovery of the dark state of rod photoreceptors following light exposure. The chain is Guanylyl cyclase-activating protein 3 (GUCA1C) from Homo sapiens (Human).